The following is a 153-amino-acid chain: Aminoglycoside N(6')-acetyltransferase type 1 (153 aa).

The N-acetyltransferase domain occupies 6–153 (PTIRQATPAD…YFRMPLEPSA (148 aa)). Positions 27, 70, 83, 119, and 140 each coordinate substrate.

Homodimer.

It catalyses the reaction kanamycin B + acetyl-CoA = N(6')-acetylkanamycin B + CoA + H(+). Functionally, catalyzes the transfer of an acetyl group from acetyl-CoA to the 6'-amino group of aminoglycoside molecules conferring resistance to antibiotics containing the purpurosamine ring including amikacin, gentamicin, kanamycin B, tobramycin, netilmicin, and isepamicin. The polypeptide is Aminoglycoside N(6')-acetyltransferase type 1 (Stenotrophomonas maltophilia (Pseudomonas maltophilia)).